The primary structure comprises 328 residues: Malate dehydrogenase (328 aa).

G12–G18 contributes to the NAD(+) binding site. Residues R92 and R98 each contribute to the substrate site. Residues N105, Q112, and T129–N131 contribute to the NAD(+) site. The substrate site is built by N131 and R162. H187 (proton acceptor) is an active-site residue.

This sequence belongs to the LDH/MDH superfamily. MDH type 2 family.

It catalyses the reaction (S)-malate + NAD(+) = oxaloacetate + NADH + H(+). Functionally, catalyzes the reversible oxidation of malate to oxaloacetate. The chain is Malate dehydrogenase from Nocardioides sp. (strain ATCC BAA-499 / JS614).